We begin with the raw amino-acid sequence, 184 residues long: ATP-dependent protease subunit HslV (184 aa).

T12 is an active-site residue. Na(+) contacts are provided by A166, C169, and T172.

The protein belongs to the peptidase T1B family. HslV subfamily. As to quaternary structure, a double ring-shaped homohexamer of HslV is capped on each side by a ring-shaped HslU homohexamer. The assembly of the HslU/HslV complex is dependent on binding of ATP.

It is found in the cytoplasm. It carries out the reaction ATP-dependent cleavage of peptide bonds with broad specificity.. With respect to regulation, allosterically activated by HslU binding. Its function is as follows. Protease subunit of a proteasome-like degradation complex believed to be a general protein degrading machinery. This is ATP-dependent protease subunit HslV from Brucella abortus (strain S19).